Consider the following 188-residue polypeptide: Phosphatidylinositol N-acetylglucosaminyltransferase subunit H (188 aa).

Belongs to the PIGH family. Component of the glycosylphosphatidylinositol-N-acetylglucosaminyltransferase (GPI-GnT) complex composed at least by PIGA, PIGC, PIGH, PIGP, PIGQ, PIGY and DPM2. Interacts with PIGQ.

It localises to the cytoplasm. It participates in glycolipid biosynthesis; glycosylphosphatidylinositol-anchor biosynthesis. Its function is as follows. Part of the glycosylphosphatidylinositol-N-acetylglucosaminyltransferase (GPI-GnT) complex that catalyzes the transfer of N-acetylglucosamine from UDP-N-acetylglucosamine to phosphatidylinositol and participates in the first step of GPI biosynthesis. The polypeptide is Phosphatidylinositol N-acetylglucosaminyltransferase subunit H (Homo sapiens (Human)).